The primary structure comprises 73 residues: Large ribosomal subunit protein bL31 (73 aa).

Belongs to the bacterial ribosomal protein bL31 family. Type A subfamily. As to quaternary structure, part of the 50S ribosomal subunit.

In terms of biological role, binds the 23S rRNA. In Synechococcus sp. (strain JA-3-3Ab) (Cyanobacteria bacterium Yellowstone A-Prime), this protein is Large ribosomal subunit protein bL31.